The chain runs to 341 residues: UDP-glucose 4-epimerase (341 aa).

It belongs to the polysaccharide synthase family.

It carries out the reaction UDP-alpha-D-glucose = UDP-alpha-D-galactose. In terms of biological role, epimerizes UDP-galactose to UDP-glucose. This chain is UDP-glucose 4-epimerase (capD), found in Rickettsia akari (strain Hartford).